We begin with the raw amino-acid sequence, 393 residues long: Trehalose import ATP-binding protein SugC (393 aa).

In terms of domain architecture, ABC transporter spans 4 to 235 (IVLDHVNKSY…PANLFVAGFI (232 aa)). 37 to 44 (GPSGCGKT) serves as a coordination point for ATP. The Helical C-loop; LSGGQ motif signature appears at 135–139 (LSGGQ).

The protein belongs to the ABC transporter superfamily. In terms of assembly, monomer. Homodimerizes in the presence of ATP. The complex is composed of two ATP-binding proteins (SugC), two transmembrane proteins (SugA and SugB) and a solute-binding protein (LpqY).

It localises to the cell inner membrane. The catalysed reaction is alpha,alpha-trehalose(out) + ATP + H2O = alpha,alpha-trehalose(in) + ADP + phosphate + H(+). Functionally, part of the ABC transporter complex LpqY-SugA-SugB-SugC, which is highly specific for uptake of trehalose. Involved in the recycling of extracellular trehalose released from trehalose-containing molecules synthesized by M.tuberculosis. Trehalose uptake is essential for virulence. Responsible for energy coupling to the transport system. The sequence is that of Trehalose import ATP-binding protein SugC (sugC) from Mycobacterium tuberculosis (strain CDC 1551 / Oshkosh).